Consider the following 287-residue polypeptide: MSDNTLWFEGIRFPMVGFSPELLREVRDKFLVKDEDTITVTYPKSGTNWLIEIVCLILSKGDPKWVQSVPIWDRSPWIETQHGNELMKSQKDPRIYTSHLPLHLFPKSFFSSKAKVIYCIRNPRDVLVSGYYFTSKMKIAEKPETLQQYMKWFLQGNVIYGSWFEHVRDWLSMREKENFLVLSYEELIKDTRSIVEKICQFLGKRLKPEEIDLVLKYSSFKFMKENEMSNYSLLPNDLTTEGFTFLRKGVVGDWKHHFTVAQAEEFDKIYQEKMAGYPPKLFPWEEC.

A 3'-phosphoadenylyl sulfate-binding site is contributed by 44-49 (KSGTNW). The substrate site is built by W72 and W77. Residue H99 is the Proton acceptor of the active site. 3'-phosphoadenylyl sulfate contacts are provided by residues R121, S129, Y184, 218–223 (SSFKFM), and 247–249 (RKG).

The protein belongs to the sulfotransferase 1 family. Homodimer. Liver, intestine and kidney.

The protein localises to the cytoplasm. It carries out the reaction an alcohol + 3'-phosphoadenylyl sulfate = an alkyl sulfate + adenosine 3',5'-bisphosphate + H(+). In terms of biological role, sulfotransferase that utilizes 3'-phospho-5'-adenylyl sulfate (PAPS) as sulfonate donor to catalyze the sulfonation of 3-beta-hydroxyl groups of neutral steroids. High preference for C21 steroid (pregnenolone). The protein is 3-beta-hydroxysteroid sulfotransferase (STD2) of Cavia porcellus (Guinea pig).